The chain runs to 197 residues: Imidazoleglycerol-phosphate dehydratase (197 aa).

This sequence belongs to the imidazoleglycerol-phosphate dehydratase family.

Its subcellular location is the cytoplasm. The enzyme catalyses D-erythro-1-(imidazol-4-yl)glycerol 3-phosphate = 3-(imidazol-4-yl)-2-oxopropyl phosphate + H2O. It participates in amino-acid biosynthesis; L-histidine biosynthesis; L-histidine from 5-phospho-alpha-D-ribose 1-diphosphate: step 6/9. The polypeptide is Imidazoleglycerol-phosphate dehydratase (Nitrosococcus oceani (strain ATCC 19707 / BCRC 17464 / JCM 30415 / NCIMB 11848 / C-107)).